We begin with the raw amino-acid sequence, 301 residues long: Tyrosine recombinase XerC (301 aa).

Positions 1–85 constitute a Core-binding (CB) domain; sequence MELISLFKQY…ALRSFYRFLV (85 aa). The region spanning 106-292 is the Tyr recombinase domain; the sequence is KLPHFFYEKE…TKEKLQESYR (187 aa). Residues Arg147, Lys171, His244, Arg247, and His270 contribute to the active site. Residue Tyr279 is the O-(3'-phospho-DNA)-tyrosine intermediate of the active site.

Belongs to the 'phage' integrase family. XerC subfamily. In terms of assembly, forms a cyclic heterotetrameric complex composed of two molecules of XerC and two molecules of XerD.

It localises to the cytoplasm. In terms of biological role, site-specific tyrosine recombinase, which acts by catalyzing the cutting and rejoining of the recombining DNA molecules. The XerC-XerD complex is essential to convert dimers of the bacterial chromosome into monomers to permit their segregation at cell division. It also contributes to the segregational stability of plasmids. The sequence is that of Tyrosine recombinase XerC from Pediococcus pentosaceus (strain ATCC 25745 / CCUG 21536 / LMG 10740 / 183-1w).